The chain runs to 1002 residues: DNA-directed RNA polymerase 1B, mitochondrial (1002 aa).

A mitochondrion-targeting transit peptide spans methionine 1 to alanine 21. Catalysis depends on residues aspartate 703, lysine 778, and aspartate 935.

It belongs to the phage and mitochondrial RNA polymerase family.

The protein localises to the mitochondrion. The catalysed reaction is RNA(n) + a ribonucleoside 5'-triphosphate = RNA(n+1) + diphosphate. In terms of biological role, DNA-dependent RNA polymerase catalyzes the transcription of DNA into RNA using the four ribonucleoside triphosphates as substrates. The polypeptide is DNA-directed RNA polymerase 1B, mitochondrial (RPOT1-TOM) (Nicotiana tabacum (Common tobacco)).